Consider the following 606-residue polypeptide: Putative amino acid transporter AAT1 (606 aa).

Positions 1–156 (MNKKYGTSSN…DEEGTNKPKR (156 aa)) are disordered. Basic and acidic residues-rich tracts occupy residues 12–25 (HDNKKDKKNNADKN) and 72–89 (SDKKNEKSDKNEKNESSK). Over residues 140-149 (SDGDYTNDEE) the composition is skewed to acidic residues. Transmembrane regions (helical) follow at residues 175–194 (TVLFICTAIGVGFLSIPYVF), 200–225 (ILSIILIILNAFESYVTTNILCTSSL), 246–271 (TIIDFGLSFGFVSSYILILILISNFL), 283–301 (LFTNNVFLVILICLLILPI), 313–332 (FLIFSLFSLSITVLTIGLQT), 352–372 (HFFKCFNILLFSFSQQPNACF), 393–412 (VILQVIFYTLFGILGYFSFL), 428–449 (VSILLCKFLLSLTFFFSVPLNF), 522–539 (MWISVIVTIFCALIACKV), 545–567 (VIGIGGGITSTLISCLLPNLIYY), and 579–605 (RYSTLFMLCFFSFMGFLSVVVTTLNLI).

The protein belongs to the amino acid/polyamine transporter 2 family.

Its subcellular location is the vacuole membrane. Its function is as follows. Putative amino acid transporter. Probably transports tryptophan. Involved in maintaining the osmotic homeostasis of the digestive vacuole. Important for the timely development and growth of the asexual-stage parasites and male gametocyte maturation. This Plasmodium falciparum (isolate 3D7) protein is Putative amino acid transporter AAT1.